The chain runs to 83 residues: Small proline-rich protein 2A3 (83 aa).

5 consecutive repeat copies span residues 21-29, 30-38, 39-47, 48-56, and 57-65. Positions 21 to 65 are 5 X 9 AA approximate tandem repeats; the sequence is PKCPEPCPPQVWPGPCRPVMCFEPCLPSVWPGPCRPVVCYEQCPP.

This sequence belongs to the cornifin (SPRR) family. Forms five pairs of intrachain disulfide bonds.

The protein resides in the secreted. It localises to the extracellular space. It is found in the cytoplasmic vesicle. The protein localises to the secretory vesicle. In terms of biological role, gut bactericidal protein that selectively kills Gram-positive bacteria by binding to negatively charged lipids on bacterial membranes, leading to bacterial membrane permeabilization and disruption. Specifically binds lipids bearing negatively charged headgroups, such as phosphatidic acid, phosphatidylserine (PS), cardiolipin (CL), and phosphatidylinositol phosphates, but not to zwitterionic or neutral lipids. Induced by type-2 cytokines in response to helminth infection and is required to protect against helminth-induced bacterial invasion of intestinal tissue. May also be involved in the development of the cornified envelope of squamous epithelia; however, additional evidences are required to confirm this result in vivo. The protein is Small proline-rich protein 2A3 of Mus musculus (Mouse).